Here is a 49-residue protein sequence, read N- to C-terminus: uncharacterized protein (49 aa).

A helical transmembrane segment spans residues 20-42 (LFLVGLTIGKMATSRILSFLGFI).

It is found in the membrane. This is an uncharacterized protein from Dictyostelium discoideum (Social amoeba).